The chain runs to 83 residues: Kunitz serine protease inhibitor Pr-mulgin 3 (83 aa).

Positions 1-24 (MSSGGLFLLLGLLTLWEVLTPVSS) are cleaved as a signal peptide. In terms of domain architecture, BPTI/Kunitz inhibitor spans 31–81 (CELPADSGSCKGNFQAFYYHPVHRTCLEFIYGGCEGNDNNFKTIDECKRTC). Intrachain disulfides connect Cys-31–Cys-81, Cys-40–Cys-64, and Cys-56–Cys-77.

The protein belongs to the venom Kunitz-type family. As to expression, expressed by the venom gland.

The protein localises to the secreted. In terms of biological role, serine protease inhibitor that acts against trypsin (EC(50)=10 nM, Ki=5nM), and plasmin (EC(50)=200 nM, Ki=100 nM). The protein is Kunitz serine protease inhibitor Pr-mulgin 3 of Pseudechis rossignolii (Papuan pigmy mulga snake).